The following is a 470-amino-acid chain: E3 SUMO-protein ligase EGR2 (470 aa).

Positions 126 to 141 are enriched in low complexity; the sequence is PPASTTASSSVTSASP. Disordered stretches follow at residues 126–153, 159–178, and 185–210; these read PPAS…GVCT, PELD…SGCT, and PSAF…SYPS. The span at 190-202 shows a compositional bias: low complexity; it reads SPPSTTSTSSLAY. An N6-acetyllysine; by EP300 modification is found at lysine 247. Positions 275-291 are enriched in gly residues; that stretch reads GPGAGVTGPGASGGGEG. The interval 275–345 is disordered; the sequence is GPGAGVTGPG…PYPCPAEGCD (71 aa). C2H2-type zinc fingers lie at residues 337 to 361, 367 to 389, and 395 to 417; these read YPCP…IRIH, FQCR…IRTH, and FACD…TKIH. Positions 408–470 are disordered; sequence DERKRHTKIH…ASCTSRTRTP (63 aa). Basic residues predominate over residues 412 to 422; the sequence is RHTKIHLRQKE. Over residues 426–439 the composition is skewed to low complexity; that stretch reads SAPSAPPSAQSSAS. Residues 440 to 450 show a composition bias toward gly residues; the sequence is GPGGSQAGGSL.

Belongs to the EGR C2H2-type zinc-finger protein family. In terms of assembly, interacts with HCFC1. Interacts with WWP2. Interacts with UBC9. Interacts with CITED1. Interacts (via phosphorylated form) with SFN. Ubiquitinated by WWP2 leading to proteasomal degradation. In terms of processing, acetylated at Lys-247. May be deacetylated by HDAC6, HDAC10 or SIRT1. As to expression, expressed mainly in the thymus.

Its subcellular location is the nucleus. The protein operates within protein modification; protein sumoylation. Functionally, sequence-specific DNA-binding transcription factor. Plays a role in hindbrain segmentation by regulating the expression of a subset of homeobox containing genes and in Schwann cell myelination by regulating the expression of genes involved in the formation and maintenance of myelin. Binds to two EGR2-consensus sites EGR2A (5'-CTGTAGGAG-3') and EGR2B (5'-ATGTAGGTG-3') in the HOXB3 enhancer and promotes HOXB3 transcriptional activation. Binds to specific DNA sites located in the promoter region of HOXA4, HOXB2 and ERBB2. Regulates hindbrain segmentation by controlling the expression of Hox genes, such as HOXA4, HOXB3 and HOXB2, and thereby specifying odd and even rhombomeres. Promotes the expression of HOXB3 in the rhombomere r5 and of HOXB3 in r3 and r5 in the hindbrain. Regulates myelination in the peripheral nervous system after birth, possibly by regulating the expression of myelin proteins, such as MPZ, and by promoting the differentiation of Schwann cells. Involved in the development of the jaw openener musculature, probably by playing a role in its innervation through trigeminal motor neurons. May play a role in adipogenesis, possibly by regulating the expression of CEBPB. Its function is as follows. E3 SUMO-protein ligase helping SUMO1 conjugation to its coregulators NAB1 and NAB2, whose sumoylation down-regulates EGR2 transcriptional activity. The sequence is that of E3 SUMO-protein ligase EGR2 (Egr2) from Mus musculus (Mouse).